Consider the following 88-residue polypeptide: Small ribosomal subunit protein uS19 (88 aa).

The protein belongs to the universal ribosomal protein uS19 family.

Its function is as follows. Protein S19 forms a complex with S13 that binds strongly to the 16S ribosomal RNA. The polypeptide is Small ribosomal subunit protein uS19 (rpsS) (Chlamydia muridarum (strain MoPn / Nigg)).